We begin with the raw amino-acid sequence, 274 residues long: MEQYYMVIDVAKCQDCNNCFMGCMDEHELNEWPGYTASMQRGHRWMNIERRERGTYPRNDINYRPTPCMHCENAPCVAKGNGAVYQREDGIVLIDPEKAKGKKELLDTCPYGVMYWNEEENVAQKCTMCAHLLDDESWAPKMPRCAHNCGSFVYEFLKTTPEAMAKKVEEEGLEVIKPELGTKPRVYYKNLYRFEKNYVTAGILVQGDCFEGAKVVLKSGGKEVASAETNFFGEFKFDALDNGEYTVEIDADGKSYSDTVVIDDKSVDLGFIKL.

[4Fe-4S] cluster contacts are provided by Cys13, Cys16, Cys19, Cys23, Cys68, Cys71, Cys76, Cys109, Cys126, Cys129, Cys145, and Cys149.

As to quaternary structure, heterodimer of a large and a small subunit. It depends on [4Fe-4S] cluster as a cofactor.

The catalysed reaction is 1,2,3,5-tetrahydroxybenzene + 1,2,3-trihydroxybenzene = 1,2,3,5-tetrahydroxybenzene + 1,3,5-trihydroxybenzene. Isomerization of pyrogallol to phloroglucin. This is Pyrogallol hydroxytransferase small subunit (bthL) from Pelobacter acidigallici.